The chain runs to 311 residues: MNNPLYQKNIISISDLSRAELELILTTAQSLKHNPQPELLKNKVIASCFFEASTRTRLSFATAVQRLGGTVIGFDNAGNTSLAQKGETLADSVKIIASYADAFFIRHPQEGAARLAAEFTNIPVINGGDGSNQHPTQTLLDLFTIYETQNRLDNLNIAFVGDLKYGRTVHSLAQALSLFNCNFYFIAPEALAMPDYILEELNEKGINYSVHSSIEEVVDSLDVLYMTRVQKERFDETEYQHIKSAFLLNADMLENVRENLKVLHPLPRVDEININVDKTPYAYYFQQAQNGIYARQALLALLLTNHFQDQA.

Carbamoyl phosphate-binding residues include R55 and T56. K85 contacts L-aspartate. Carbamoyl phosphate is bound by residues R106, H134, and Q137. R167 and R228 together coordinate L-aspartate. Carbamoyl phosphate is bound by residues L266 and P267.

Belongs to the aspartate/ornithine carbamoyltransferase superfamily. ATCase family. As to quaternary structure, heterododecamer (2C3:3R2) of six catalytic PyrB chains organized as two trimers (C3), and six regulatory PyrI chains organized as three dimers (R2).

It carries out the reaction carbamoyl phosphate + L-aspartate = N-carbamoyl-L-aspartate + phosphate + H(+). Its pathway is pyrimidine metabolism; UMP biosynthesis via de novo pathway; (S)-dihydroorotate from bicarbonate: step 2/3. Its function is as follows. Catalyzes the condensation of carbamoyl phosphate and aspartate to form carbamoyl aspartate and inorganic phosphate, the committed step in the de novo pyrimidine nucleotide biosynthesis pathway. This is Aspartate carbamoyltransferase catalytic subunit from Psychromonas ingrahamii (strain DSM 17664 / CCUG 51855 / 37).